The sequence spans 58 residues: UPF0391 membrane protein Sputcn32_1322 (58 aa).

2 helical membrane-spanning segments follow: residues 6-26 and 28-48; these read LMFL…IAGA and AGIA…SLLV.

Belongs to the UPF0391 family.

The protein localises to the cell membrane. The chain is UPF0391 membrane protein Sputcn32_1322 from Shewanella putrefaciens (strain CN-32 / ATCC BAA-453).